Consider the following 397-residue polypeptide: Chorismate synthase (397 aa).

NADP(+) is bound by residues R40 and R46. Residues 129-131 (RSS), 257-258 (QA), G302, 317-321 (KPISS), and R343 each bind FMN.

The protein belongs to the chorismate synthase family. In terms of assembly, homotetramer. FMNH2 serves as cofactor.

It catalyses the reaction 5-O-(1-carboxyvinyl)-3-phosphoshikimate = chorismate + phosphate. The protein operates within metabolic intermediate biosynthesis; chorismate biosynthesis; chorismate from D-erythrose 4-phosphate and phosphoenolpyruvate: step 7/7. In terms of biological role, catalyzes the anti-1,4-elimination of the C-3 phosphate and the C-6 proR hydrogen from 5-enolpyruvylshikimate-3-phosphate (EPSP) to yield chorismate, which is the branch point compound that serves as the starting substrate for the three terminal pathways of aromatic amino acid biosynthesis. This reaction introduces a second double bond into the aromatic ring system. The sequence is that of Chorismate synthase from Chlorobium luteolum (strain DSM 273 / BCRC 81028 / 2530) (Pelodictyon luteolum).